The following is a 175-amino-acid chain: Lithostathine (175 aa).

The N-terminal stretch at Met1–Gly26 is a signal peptide. Residues Glu27–Arg37 constitute a propeptide that is removed on maturation. Residues Ile38 to Phe173 enclose the C-type lectin domain. 3 disulfide bridges follow: Cys40–Cys51, Cys68–Cys171, and Cys146–Cys163.

As to quaternary structure, cleaved to give an A chain and a B chain joined by a disulfide bond. In pancreatic acinar cells.

Its subcellular location is the secreted. In terms of biological role, might act as an inhibitor of spontaneous calcium carbonate precipitation. The protein is Lithostathine (PTP) of Bos taurus (Bovine).